The sequence spans 796 residues: MDVDVEEAALEQVAALLQRPDQLEKLPELKKRADRKKLAVEAMLRTGVQGQLEGIRTAIAHLQTASDDITAISQGVHDIRERLGPFPQLKEKLRELRDANARHGQYAAAMENLKHIFNLQTTLQEIRDALDDEKSGGNLLLAHKHIMDLERARDELLAEVHKMSGTNTEKEQMLLVNFFKGVDSVVAELSKNMWFILGRTLEMVKGNEQGGGPQQVVTCLRIVEREERIDKFYMEARSKNSSAFVPPGRPRNWKEKALRSLEKTVSNRVDGNQLEDRSLNKAWLARYLEVCKNVIMDDLQLAKVAIPCFPPDWQIYDRYVHMYHTSVCRRLREVASEHLEKSELVQLMSWIKFYASEDMLGHPKLRINAQAILQDSPVLSRSTLNQLCDQFVEMSRDDLKLWLKNTVSHETHDWYKNLRPSEDNHGYFYTDLPNTVFGMLKDTVTLAKEVSVEVIPSIINLTIQEFNELAGKYRDAFTAYKTDYFAERSKYQEFTSNIIAIANNLHTCIESTEKYKQQIRLSMEGEQNAAAAMTTPLASGRRTAVRQQQLIENMDALNTKWSNAASVAVNYLREEVITDIAPSLVEIFSKKWLTGSAALETVCMTISDYYHDHKHLRPVTRSTLLMDLQFRIVSEYLKAIETKRVSLNSYEERALAGKRMKADVVRLDNLYAEFATSSDMADQLPLLTSIVAAAGDVISLKDKSLLSLEATSFARKFPNCPAELLSAVIATRDDISGSEARSLASEVLQHVQFHPKDQIFDQLFALRQQENSERLPNLGMANMFKADFMSMLKRDA.

Residues 87-174 (PQLKEKLREL…GTNTEKEQML (88 aa)) are a coiled coil.

This sequence belongs to the SEC6 family. In terms of assembly, the exocyst complex is composed of sec-3/exoc1, sec-5/exoc2, sec-6/exoc3, sec-8/exoc4, sec-10/exoc5, sec-15/exoc6, exo-70/exoc7 and exo-84/exoc8.

In terms of biological role, component of the exocyst complex involved in the docking of exocytic vesicles with fusion sites on the plasma membrane. The chain is Exocyst complex component 3 (sec-6) from Caenorhabditis elegans.